We begin with the raw amino-acid sequence, 388 residues long: N-acetylneuraminate epimerase (388 aa).

The signal sequence occupies residues 1 to 26 (MFSLIGAKRQAIGIAALAWSTGAVMA). Kelch repeat units follow at residues 48 to 92 (MAYV…AAAG), 94 to 147 (KIFA…VGLA), 149 to 186 (GRIA…KLVD), 187 to 232 (SYMG…ATMG), 236 to 285 (FLLV…VAGA), 307 to 356 (ANAA…DAPG), and 358 to 387 (LLVV…LSVE).

It belongs to the NanM family. Homodimer.

It localises to the periplasm. It carries out the reaction N-acetyl-alpha-neuraminate = N-acetyl-beta-neuraminate. Converts alpha-N-acetylneuranimic acid (Neu5Ac) to the beta-anomer, accelerating the equilibrium between the alpha- and beta-anomers. Probably facilitates sialidase-negative bacteria to compete successfully for limited amounts of extracellular Neu5Ac, which is likely taken up in the beta-anomer. In addition, the rapid removal of sialic acid from solution might be advantageous to the bacterium to damp down host responses. The polypeptide is N-acetylneuraminate epimerase (Brucella suis (strain ATCC 23445 / NCTC 10510)).